A 601-amino-acid chain; its full sequence is MAPGDEMRKFTRSFFRACPDLSSVTHAIVRQKFLIHVGRDHLEPEEKQALKRLVEEELPKMQADAGTREGKPDFIKVKRSPAPCSDPKKKRFRFNSESESSSSPSSPDGSGPSTKNRTTKKTCLRRALKKAVESTDEDHQTDLDAKMGLEESSEGEAEGSVRSGKVTEEEEDMKQEQKGQVRKQAGAKDKQVPLKADRKQVREESGSSEEEAVLQRAKVEGSTGANCQEESEESGEESPAKKKELSEPRSRSNRAERTARERKSYKQKSRPGRPTGGLRDSEAEKEGGTVGSGDSSEEGEAEKEGGTVGSGDSSEKGEAEKEEGTVGSGDSSEEGEEHSVKRKSKVRTQTESGRRQNTSSRDDSNSTQEQAAAQGTTKSGSLGSSNGDSDTEREVSDSQAGQNTKEERKSRSSNKSSKNGQARSCSSSSDSSPEPTGQKGKARSSSSSSDSGPEPTGRKAASRCGEDHPAVARLKRYIRACGAHRNYKKLLGSCSSHKARLSVLRAELEALGMKGNPSLEKCRALKLQREEAAEVAALDVANIISSTGRPRRRNAWNPSGEGTSPGETYRRTLDSEEEQPRQAPPDWSHMRDIISSDGDSS.

Disordered stretches follow at residues 60 to 469 (KMQA…EDHP) and 546 to 601 (STGR…GDSS). A compositionally biased stretch (basic and acidic residues) spans 66–76 (GTREGKPDFIK). Residues Ser-85, Ser-96, and Ser-98 each carry the phosphoserine modification. A compositionally biased stretch (low complexity) spans 97–113 (ESESSSSPSSPDGSGPS). Positions 117–129 (RTTKKTCLRRALK) are enriched in basic residues. Residues 130–149 (KAVESTDEDHQTDLDAKMGL) are compositionally biased toward basic and acidic residues. Residue Ser-134 is modified to Phosphoserine. 2 positions are modified to phosphothreonine: Thr-135 and Thr-141. Phosphoserine occurs at positions 152, 153, and 163. At Thr-167 the chain carries Phosphothreonine. Residues 186-205 (GAKDKQVPLKADRKQVREES) are compositionally biased toward basic and acidic residues. 11 positions are modified to phosphoserine: Ser-205, Ser-207, Ser-208, Ser-231, Ser-234, Ser-238, Ser-313, Ser-359, Ser-360, Ser-384, and Ser-389. Basic and acidic residues-rich tracts occupy residues 238-264 (SPAK…ERKS) and 313-324 (SSEKGEAEKEEG). Positions 347–378 (RTQTESGRRQNTSSRDDSNSTQEQAAAQGTTK) are enriched in polar residues. A compositionally biased stretch (low complexity) spans 379-388 (SGSLGSSNGD). A Phosphothreonine modification is found at Thr-391. Phosphoserine occurs at positions 396 and 398. Residues 413-432 (SNKSSKNGQARSCSSSSDSS) are compositionally biased toward low complexity. The interaction with the histone H2A-H2B complex stretch occupies residues 429–572 (SDSSPEPTGQ…TSPGETYRRT (144 aa)). Residues 556 to 566 (WNPSGEGTSPG) show a composition bias toward polar residues. Phosphoserine occurs at positions 564, 575, 595, 596, and 600. Basic and acidic residues predominate over residues 568-580 (TYRRTLDSEEEQP).

As to quaternary structure, interacts (via C-terminus) with histone H2A-H2B dimers; the interaction is direct. Interacts with HIRA. Interacts with CK2. Phosphorylated by CK2.

It is found in the nucleus. Its function is as follows. Histone chaperone that carries a H2A-H2B histone complex and facilitates its deposition onto chromatin. In Mus musculus (Mouse), this protein is HIRA-interacting protein 3.